A 326-amino-acid chain; its full sequence is Diphthine methyltransferase (326 aa).

4 WD repeats span residues 65–105, 113–152, 155–195, and 293–326; these read MHCD…ELMF, DSSV…IKNK, EHDY…SCIW, and EHES…WEDI.

This sequence belongs to the DPH7 family.

The protein localises to the cytoplasm. The protein resides in the nucleus. It carries out the reaction diphthine methyl ester-[translation elongation factor 2] + H2O = diphthine-[translation elongation factor 2] + methanol + H(+). It functions in the pathway protein modification; peptidyl-diphthamide biosynthesis. Catalyzes the demethylation of diphthine methyl ester to form diphthine, an intermediate in diphthamide biosynthesis, a post-translational modification of histidine which occurs in translation elongation factor 2 (eft201 and eft202). This Schizosaccharomyces pombe (strain 972 / ATCC 24843) (Fission yeast) protein is Diphthine methyltransferase (rrt2).